Reading from the N-terminus, the 721-residue chain is K(+)-insensitive pyrophosphate-energized proton pump (721 aa).

The next 5 helical transmembrane spans lie at 8–28 (LLGV…AVWV), 57–77 (YRTL…AIDM), 82–102 (FGLT…AGYL), 136–156 (VMGL…YLVF), and 168–188 (LVAL…GGGI). Residue K191 participates in substrate binding. The Mg(2+) site is built by D194, D198, N221, and D224. The next 5 helical transmembrane spans lie at 247–267 (AIFL…IILF), 294–314 (ISLA…IGAF), 323–343 (ALAL…IVKI), 374–394 (YGVG…VLGI), and 416–436 (AGIF…GIII). A Mg(2+)-binding site is contributed by D446. The next 4 helical transmembrane spans lie at 483 to 503 (AIAS…FEIV), 527 to 547 (LINA…YFFS), 599 to 619 (FLIP…LLGW), and 621 to 641 (ALAG…LLMA). Ca(2+)-binding residues include D648, D672, and D676. Position 679 (K679) interacts with substrate. A helical transmembrane segment spans residues 698-718 (VVFTYVIVSTNIALGIWPSGL).

The protein belongs to the H(+)-translocating pyrophosphatase (TC 3.A.10) family. K(+)-insensitive subfamily. In terms of assembly, homodimer. Requires Mg(2+) as cofactor.

The protein resides in the cell membrane. The enzyme catalyses diphosphate + H2O + H(+)(in) = 2 phosphate + 2 H(+)(out). In terms of biological role, proton pump that utilizes the energy of pyrophosphate hydrolysis as the driving force for proton movement across the membrane. Generates a proton motive force. This Pyrobaculum aerophilum (strain ATCC 51768 / DSM 7523 / JCM 9630 / CIP 104966 / NBRC 100827 / IM2) protein is K(+)-insensitive pyrophosphate-energized proton pump.